We begin with the raw amino-acid sequence, 177 residues long: Small ribosomal subunit protein uS5 (177 aa).

Residues 19-82 (FIEKLVAIKR…DQAQKQMIKV (64 aa)) form the S5 DRBM domain.

Belongs to the universal ribosomal protein uS5 family. As to quaternary structure, part of the 30S ribosomal subunit. Contacts proteins S4 and S8.

In terms of biological role, with S4 and S12 plays an important role in translational accuracy. Located at the back of the 30S subunit body where it stabilizes the conformation of the head with respect to the body. In Magnetococcus marinus (strain ATCC BAA-1437 / JCM 17883 / MC-1), this protein is Small ribosomal subunit protein uS5.